The following is a 361-amino-acid chain: Phosphoserine aminotransferase (361 aa).

Residue arginine 43 coordinates L-glutamate. Pyridoxal 5'-phosphate is bound by residues 77–78, tryptophan 103, threonine 153, aspartate 173, and glutamine 196; that span reads AS. An N6-(pyridoxal phosphate)lysine modification is found at lysine 197. 238–239 is a binding site for pyridoxal 5'-phosphate; it reads NT.

It belongs to the class-V pyridoxal-phosphate-dependent aminotransferase family. SerC subfamily. In terms of assembly, homodimer. It depends on pyridoxal 5'-phosphate as a cofactor.

Its subcellular location is the cytoplasm. The enzyme catalyses O-phospho-L-serine + 2-oxoglutarate = 3-phosphooxypyruvate + L-glutamate. It carries out the reaction 4-(phosphooxy)-L-threonine + 2-oxoglutarate = (R)-3-hydroxy-2-oxo-4-phosphooxybutanoate + L-glutamate. Its pathway is amino-acid biosynthesis; L-serine biosynthesis; L-serine from 3-phospho-D-glycerate: step 2/3. Functionally, catalyzes the reversible conversion of 3-phosphohydroxypyruvate to phosphoserine and of 3-hydroxy-2-oxo-4-phosphonooxybutanoate to phosphohydroxythreonine. This Bacillus anthracis (strain A0248) protein is Phosphoserine aminotransferase.